We begin with the raw amino-acid sequence, 148 residues long: Oleosin 1 (148 aa).

Residue A2 is modified to N-acetylalanine. The polar stretch occupies residues 2 to 28 (ADQHFQQPLHFQGSYGQQQPRSYQVAK). A hydrophobic region spans residues 29–148 (AATAVTAGGS…HVPSGQQQSS (120 aa)). The next 2 membrane-spanning stretches (helical) occupy residues 37-57 (GSLLVLSGLVLAGTVIALTIA) and 81-101 (GFLTSGGFGVAAVTVLSWIYK).

Belongs to the oleosin family.

The protein resides in the lipid droplet. Its subcellular location is the membrane. May have a structural role to stabilize the lipid body during desiccation of the seed by preventing coalescence of the oil. Probably interacts with both lipid and phospholipid moieties of lipid bodies. May also provide recognition signals for specific lipase anchorage in lipolysis during seedling growth. The sequence is that of Oleosin 1 (OLE1) from Prunus dulcis (Almond).